Reading from the N-terminus, the 200-residue chain is MTVVIGLTGGIASGKSTVSQMFRELSIPVIDADIIAREVVEKGKPAYNKIVEVFGTEVLQEDGELDRPKLGSVVFHNEEKRLQLNKIVHPAVHEEMNRQKEMYIKEGMQAVVLDIPLLFESKLTSLVDRVLVVAVKPHTQLERLMKRNNFSEEEATARIQSQMSLEEKVKNADEVINNDGTIMGTKTQLQAILKKWNIID.

Residues 4–200 (VIGLTGGIAS…AILKKWNIID (197 aa)) form the DPCK domain. ATP is bound at residue 12-17 (ASGKST).

It belongs to the CoaE family.

The protein resides in the cytoplasm. It catalyses the reaction 3'-dephospho-CoA + ATP = ADP + CoA + H(+). Its pathway is cofactor biosynthesis; coenzyme A biosynthesis; CoA from (R)-pantothenate: step 5/5. Its function is as follows. Catalyzes the phosphorylation of the 3'-hydroxyl group of dephosphocoenzyme A to form coenzyme A. This chain is Dephospho-CoA kinase, found in Bacillus cereus (strain ZK / E33L).